The sequence spans 311 residues: Phospholipid phosphatase 3 (311 aa).

Residues 1 to 33 are Cytoplasmic-facing; the sequence is MQNYKYDKAIVAESKNGGSPALNNNPRKGGSKR. S19 is subject to Phosphoserine. A helical transmembrane segment spans residues 34-54; sequence VLLICLDLFCLFMAGLPFIII. Topologically, residues 55–85 are extracellular; it reads ETSTIKPYHRGFYCNDESIKYPQKTGETIND. Residues 86–106 traverse the membrane as a helical segment; that stretch reads AVLTAVGIVIAILAIITGEFY. The Cytoplasmic segment spans residues 107–123; that stretch reads RIYYLKEKSRSTIQNPY. Residues 109–110 carry the Dityrosine basolateral targeting motif motif; the sequence is YY. The chain crosses the membrane as a helical span at residues 124–144; it reads VAALYKQVGCFLFGCAISQSF. At 145–194 the chain is on the extracellular side; it reads TDIAKVSIGRLRPHFLNVCNPDFSQINCSVGYIQNYRCRGEDSKVQEARK. Positions 149–157 are phosphatase sequence motif I; it reads KVSIGRLRP. N171 carries N-linked (GlcNAc...) asparagine glycosylation. The short motif at 183 to 185 is the Integrin-binding motif element; it reads RGE. Residues 195 to 215 form a helical membrane-spanning segment; that stretch reads SFFSGHASFSMYTMLYLVLYL. Positions 197 to 200 are phosphatase sequence motif II; sequence FSGH. The active-site Proton donors is the H200. Residues 216-226 lie on the Cytoplasmic side of the membrane; sequence QARFTWRGARL. Residues 227–244 form a helical membrane-spanning segment; that stretch reads LRPLLQFTLIMMAFYTGL. The interval 245–256 is phosphatase sequence motif III; sequence SRVSDHKHHPSD. The Extracellular portion of the chain corresponds to 245 to 258; the sequence is SRVSDHKHHPSDVL. Catalysis depends on H252, which acts as the Nucleophile. Residues 259–279 traverse the membrane as a helical segment; the sequence is AGFAQGALVACCIVFFVSDLF. Residues 276–311 form a mediates interaction with CTNND1 region; it reads SDLFKTKTTLSLPPSAIRKDMLSPVDIDRSNHHNMV. Residues 280–311 are Cytoplasmic-facing; that stretch reads KTKTTLSLPPSAIRKDMLSPVDIDRSNHHNMV.

This sequence belongs to the PA-phosphatase related phosphoesterase family. In terms of assembly, forms functional homodimers and homooligomers that are not required for substrate recognition and catalytic activity. Can also form heterooligomers with other PLPP2 and PLPP3. Interacts with CTNND1; negatively regulates the PLPP3-mediated stabilization of beta-catenin/CTNNB1. In terms of processing, N-glycosylated. Contains high-mannose oligosaccharides.

It localises to the cell membrane. Its subcellular location is the basolateral cell membrane. The protein resides in the endoplasmic reticulum membrane. The protein localises to the endoplasmic reticulum-Golgi intermediate compartment membrane. It is found in the golgi apparatus membrane. It localises to the golgi apparatus. Its subcellular location is the trans-Golgi network membrane. The protein resides in the membrane raft. The enzyme catalyses a 1,2-diacyl-sn-glycero-3-phosphate + H2O = a 1,2-diacyl-sn-glycerol + phosphate. It catalyses the reaction 1,2-dihexadecanoyl-sn-glycero-3-phosphate + H2O = 1,2-dihexadecanoyl-sn-glycerol + phosphate. The catalysed reaction is 1,2-di-(9Z-octadecenoyl)-sn-glycero-3-phosphate + H2O = 1,2-di-(9Z-octadecenoyl)-sn-glycerol + phosphate. It carries out the reaction a monoacyl-sn-glycero-3-phosphate + H2O = a monoacylglycerol + phosphate. The enzyme catalyses (9Z)-octadecenoyl-sn-glycero-3-phosphate + H2O = (9Z-octadecenoyl)-glycerol + phosphate. It catalyses the reaction sphing-4-enine 1-phosphate + H2O = sphing-4-enine + phosphate. The catalysed reaction is an N-acylsphing-4-enine 1-phosphate + H2O = an N-acylsphing-4-enine + phosphate. It carries out the reaction N-(octanoyl)-sphing-4-enine-1-phosphate + H2O = N-octanoylsphing-4-enine + phosphate. The enzyme catalyses N-(9Z-octadecenoyl)-ethanolamine phosphate + H2O = N-(9Z-octadecenoyl) ethanolamine + phosphate. The protein operates within lipid metabolism; phospholipid metabolism. Magnesium-independent phospholipid phosphatase. Insensitive to N-ethylmaleimide. Inhibited by sphingosine, zinc ions and modestly by propanolol. Magnesium-independent phospholipid phosphatase of the plasma membrane that catalyzes the dephosphorylation of a variety of glycerolipid and sphingolipid phosphate esters including phosphatidate/PA, lysophosphatidate/LPA, diacylglycerol pyrophosphate/DGPP, sphingosine 1-phosphate/S1P and ceramide 1-phosphate/C1P. Also acts on N-oleoyl ethanolamine phosphate/N-(9Z-octadecenoyl)-ethanolamine phosphate, a potential physiological compound. Has both an extracellular and an intracellular phosphatase activity, allowing the hydrolysis and the cellular uptake of these bioactive lipid mediators from the milieu, regulating signal transduction in different cellular processes. Through the dephosphorylation of extracellular sphingosine-1-phosphate and the regulation of its extra- and intracellular availability, plays a role in vascular homeostasis, regulating endothelial cell migration, adhesion, survival, proliferation and the production of pro-inflammatory cytokines. By maintaining the appropriate levels of this lipid in the cerebellum, also ensure its proper development and function. Through its intracellular lipid phosphatase activity may act in early compartments of the secretory pathway, regulating the formation of Golgi to endoplasmic reticulum retrograde transport carriers. In terms of biological role, independently of this phosphatase activity may also function in the Wnt signaling pathway and the stabilization of beta-catenin/CTNNB1, thereby regulating cell proliferation, migration and differentiation in angiogenesis or yet in tumor growth. Also plays a role in integrin-mediated cell-cell adhesion in angiogenesis. The polypeptide is Phospholipid phosphatase 3 (Bos taurus (Bovine)).